Consider the following 255-residue polypeptide: Phosphatidylcholine synthase (255 aa).

At 1–13 the chain is on the cytoplasmic side; the sequence is MNPIKPPFTLNQY. Residues 14–34 traverse the membrane as a helical segment; sequence FAAWFVHVFTASAACIGVFSL. Residues 35–42 lie on the Periplasmic side of the membrane; that stretch reads YKIYQHDY. Residues 43–63 traverse the membrane as a helical segment; that stretch reads VFALWLMAITVFIDAVDGSLA. Over 64–76 the chain is Cytoplasmic; it reads RLVHVKSVLPKID. The helical transmembrane segment at 77–97 threads the bilayer; it reads GALLDNIVDYLNYVITPCFFL. Topologically, residues 98–103 are periplasmic; that stretch reads LVKPGM. The chain crosses the membrane as a helical span at residues 104 to 124; sequence LPADYVVPITAAITITSAYQF. Over 125 to 133 the chain is Cytoplasmic; it reads CQDDAKTPD. Residues 134-154 form a helical membrane-spanning segment; it reads HFFKGFPCYWNITVFYMYIFN. A topological domain (periplasmic) is located at residue Thr-155. The helical transmembrane segment at 156-175 threads the bilayer; the sequence is SMIVNTVLLSLFCVLIFIPV. Residues 176–190 are Cytoplasmic-facing; that stretch reads KYVYPSRLDYLTESR. Residues 191-211 form a helical membrane-spanning segment; that stretch reads VLKILMHCCSALYGISSFCLL. Residues 212–217 lie on the Periplasmic side of the membrane; that stretch reads VNYPET. The chain crosses the membrane as a helical span at residues 218–238; it reads NKLWVSLSLGYVGMYLFLSFY. Topologically, residues 239–255 are cytoplasmic; sequence RTYYPMFKAKITANNKD.

This sequence belongs to the CDP-alcohol phosphatidyltransferase class-I family. Mn(2+) is required as a cofactor.

The protein localises to the cell inner membrane. It carries out the reaction a CDP-1,2-diacyl-sn-glycerol + choline = a 1,2-diacyl-sn-glycero-3-phosphocholine + CMP + H(+). Functionally, condenses choline with CDP-diglyceride to produce phosphatidylcholine and CMP. Affects virulence of this bacterium when there is a complete loss of phosphatidylcholine formation due to absence of both the synthase (pcs) and the methylation (pmtA) pathways. Reduced virulence results from lowered yields of bacteria within host macrophages and because of loss of high multiplicity cytotoxicity. This chain is Phosphatidylcholine synthase, found in Legionella pneumophila subsp. pneumophila (strain Philadelphia 1 / ATCC 33152 / DSM 7513).